Consider the following 333-residue polypeptide: Protein amalgam (333 aa).

An N-terminal signal peptide occupies residues 1–23; it reads MARLRLLIGLIFCLAISLDSVLS. The Ig-like V-type domain occupies 25-128; the sequence is PVISQISKDV…VLVSATEKVT (104 aa). Asparagine 45 and asparagine 86 each carry an N-linked (GlcNAc...) asparagine glycan. Cystine bridges form between cysteine 46–cysteine 117, cysteine 161–cysteine 208, and cysteine 251–cysteine 307. Ig-like C2-type domains are found at residues 139–223 and 230–323; these read PVIA…RLIR and PQIA…LHLF. Asparagine 308 is a glycosylation site (N-linked (GlcNAc...) asparagine).

Its subcellular location is the cell membrane. This chain is Protein amalgam (Ama), found in Drosophila melanogaster (Fruit fly).